The chain runs to 509 residues: MGCGCSSHPEDDWMENIDVCENCHYPIVPLDGKATLLFRNGSEVRDPLVRYEGSNPPASPLQDNLVIALHSYKPSHDGDLGFEKGEQLRILEQNGEWWKAQSLTTGQEGFIPFNFVAKANSLEPEPWFFKNLSRKDAERQLLAPGNTHGSFLIRESESTAGSFSLSVRDFDQNQGEVVKHYKIRNLDNGGFYISPRITFPGLHELVRHYTNASDGLCTRLSRPCQTQKPQKPWWEDEWEVPRETLKLVERLGAGQFGEVWMGYYNDHTKVAVKSLKQGSMSPDAFLAEANLMKQLQHQRLVRLYAVVTQEPIYIITEYMENGSLVDFLKTPSGIKLTINKLLDMAAQIAEGMAFIEERNYIHRDLRAANILVSDTLSCKIADFGLARLIEDNEYTAREGAKFPIKWTAPEAINYGTFTIKSDVWSFGILLTEIVTHGRIPYPGMTNPEVIQNLERGYRMVRPDNCPEELYHLMMLCWKERPEDRPTFDYLRSVLEDFFTATEGQYQPQP.

G2 carries the N-myristoyl glycine lipid modification. The interactions with CD4 and CD8 stretch occupies residues 2 to 72 (GCGCSSHPED…DNLVIALHSY (71 aa)). Residues C3 and C5 are each lipidated (S-palmitoyl cysteine). The 61-residue stretch at 61-121 (LQDNLVIALH…PFNFVAKANS (61 aa)) folds into the SH3 domain. Residue K99 forms a Glycyl lysine isopeptide (Lys-Gly) (interchain with G-Cter in ubiquitin) linkage. Residue S102 is modified to Phosphoserine. In terms of domain architecture, SH2 spans 127-224 (WFFKNLSRKD…GLCTRLSRPC (98 aa)). The segment at 154–242 (RESESTAGSF…WWEDEWEVPR (89 aa)) is interaction with PTPRH. Phosphothreonine is present on T159. Position 162 is a phosphoserine (S162). At Y192 the chain carries Phosphotyrosine. S194 is modified (phosphoserine). The Protein kinase domain maps to 245–498 (LKLVERLGAG…YLRSVLEDFF (254 aa)). ATP-binding positions include 251-259 (LGAGQFGEV) and K273. Residue K276 forms a Glycyl lysine isopeptide (Lys-Gly) (interchain with G-Cter in ubiquitin) linkage. D364 (proton acceptor) is an active-site residue. At Y394 the chain carries Phosphotyrosine; by autocatalysis. The residue at position 505 (Y505) is a Phosphotyrosine; by CSK.

The protein belongs to the protein kinase superfamily. Tyr protein kinase family. SRC subfamily. As to quaternary structure, binds to the cytoplasmic domain of cell surface receptors, such as AXL, CD2, CD4, CD5, CD8, CD44, CD45 and CD122. Also binds to effector molecules, such as PI4K, VAV1, RASA1, FYB1 and to other protein kinases including CDK1, RAF1, ZAP70 and SYK. Binds to phosphatidylinositol 3'-kinase (PI3K) from T-lymphocytes through its SH3 domain and to the tyrosine phosphorylated form of KHDRBS1/p70 through its SH2 domain. Interacts with SQSTM1. Interacts with phosphorylated LIME1. LIME1. Interacts with CBLB and PTPRH. Interacts with RUNX3. Forms a signaling complex with EPHA1, PTK2B and PI3-KINASE; upon activation by EFNA1 which may regulate T-lymphocytes migration. Associates with ZAP70 and RHOH; these interactions allow LCK-mediated RHOH and CD3 subunit phosphorylation in the presence of functional ZAP70. Interacts with CEACAM1 (via cytoplasmic domain); mediates CEACAM1 phosphorylation resulting in PTPN6 recruitment that dephosphorylates TCR stimulation-induced CD247 and ZAP70. Interacts with CD160. Interacts with CD48. In terms of processing, autophosphorylated on Tyr-394, increasing enzymatic activity, this site is dephosphorylated by PTN22. Phosphorylated on Tyr-505 by CSK, decreasing activity. Dephosphorylated by PTPRC/CD45. Dephosphorylation at Tyr-394 by PTPN2 negatively regulates T-cells differentiation. Dephosphorylation at Tyr-394 by DUSP22 negatively regulates T-cell receptor signaling. Myristoylation is required prior to palmitoylation. Post-translationally, palmitoylation regulates association with the plasma membrane and could be mediated by ZDHHC2. In terms of processing, 'Lys-63'-linked ubiquitinated at Lys-99 and Lys-276 by UBR2; this modification is required for autophosphorylation at Tyr-394.

The protein localises to the cell membrane. It localises to the cytoplasm. It is found in the cytosol. The catalysed reaction is L-tyrosyl-[protein] + ATP = O-phospho-L-tyrosyl-[protein] + ADP + H(+). The relative activities of the inhibitory tyrosine-protein kinase CSK and the activating tyrosine-protein phosphatase PTPRC/CD45 determine the level of LCK activity. These interactions allow rapid and efficient activation of LCK in response to TCR stimulation. Non-receptor tyrosine-protein kinase that plays an essential role in the selection and maturation of developing T-cells in the thymus and in the function of mature T-cells. Plays a key role in T-cell antigen receptor (TCR)-linked signal transduction pathways. Constitutively associated with the cytoplasmic portions of the CD4 and CD8 surface receptors. Association of the TCR with a peptide antigen-bound MHC complex facilitates the interaction of CD4 and CD8 with MHC class II and class I molecules, respectively, thereby recruiting the associated LCK protein to the vicinity of the TCR/CD3 complex. LCK then phosphorylates tyrosine residues within the immunoreceptor tyrosine-based activation motifs (ITAM) of the cytoplasmic tails of the TCR-gamma chains and CD3 subunits, initiating the TCR/CD3 signaling pathway. Once stimulated, the TCR recruits the tyrosine kinase ZAP70, that becomes phosphorylated and activated by LCK. Following this, a large number of signaling molecules are recruited, ultimately leading to lymphokine production. LCK also contributes to signaling by other receptor molecules. Associates directly with the cytoplasmic tail of CD2, which leads to hyperphosphorylation and activation of LCK. Also plays a role in the IL2 receptor-linked signaling pathway that controls the T-cell proliferative response. Binding of IL2 to its receptor results in increased activity of LCK. Is expressed at all stages of thymocyte development and is required for the regulation of maturation events that are governed by both pre-TCR and mature alpha beta TCR. Phosphorylates other substrates including RUNX3, PTK2B/PYK2, the microtubule-associated protein MAPT, RHOH or TYROBP. Interacts with UNC119; this interaction plays a crucial role in activation of LCK. This chain is Tyrosine-protein kinase Lck (LCK), found in Aotus nancymaae (Ma's night monkey).